The chain runs to 62 residues: Photosystem II reaction center protein Z (62 aa).

2 consecutive transmembrane segments (helical) span residues 8–28 (ALAALVFFSFVMVIGVPFAYA) and 41–61 (WVGSGIWTILVIVVAVLNFFV).

It belongs to the PsbZ family. In terms of assembly, PSII is composed of 1 copy each of membrane proteins PsbA, PsbB, PsbC, PsbD, PsbE, PsbF, PsbH, PsbI, PsbJ, PsbK, PsbL, PsbM, PsbT, PsbX, PsbY, PsbZ, Psb30/Ycf12, peripheral proteins PsbO, CyanoQ (PsbQ), PsbU, PsbV and a large number of cofactors. It forms dimeric complexes.

It is found in the cellular thylakoid membrane. Functionally, may control the interaction of photosystem II (PSII) cores with the light-harvesting antenna, regulates electron flow through the 2 photosystem reaction centers. PSII is a light-driven water plastoquinone oxidoreductase, using light energy to abstract electrons from H(2)O, generating a proton gradient subsequently used for ATP formation. The polypeptide is Photosystem II reaction center protein Z (Gloeothece citriformis (strain PCC 7424) (Cyanothece sp. (strain PCC 7424))).